Here is a 732-residue protein sequence, read N- to C-terminus: Beta-galactosidase 5 (732 aa).

The N-terminal stretch at Met1–Ser23 is a signal peptide. Catalysis depends on Glu187, which acts as the Proton donor. Residue Glu256 is the Nucleophile of the active site. N-linked (GlcNAc...) asparagine glycosylation occurs at Asn466.

The protein belongs to the glycosyl hydrolase 35 family. In terms of tissue distribution, expressed in leaves and flowers.

The protein resides in the secreted. The protein localises to the extracellular space. Its subcellular location is the apoplast. It carries out the reaction Hydrolysis of terminal non-reducing beta-D-galactose residues in beta-D-galactosides.. The chain is Beta-galactosidase 5 (BGAL5) from Arabidopsis thaliana (Mouse-ear cress).